The following is a 145-amino-acid chain: Large ribosomal subunit protein uL24 (145 aa).

The segment at 108–145 (EPIQEEQQKTEETKQEIAPEEVEAKEAQDKQEVKENDQ) is disordered. Positions 113 to 145 (EQQKTEETKQEIAPEEVEAKEAQDKQEVKENDQ) are enriched in basic and acidic residues.

Belongs to the universal ribosomal protein uL24 family. As to quaternary structure, part of the 50S ribosomal subunit.

In terms of biological role, one of two assembly initiator proteins, it binds directly to the 5'-end of the 23S rRNA, where it nucleates assembly of the 50S subunit. Located at the polypeptide exit tunnel on the outside of the subunit. The polypeptide is Large ribosomal subunit protein uL24 (rpl24) (Thermoplasma volcanium (strain ATCC 51530 / DSM 4299 / JCM 9571 / NBRC 15438 / GSS1)).